Reading from the N-terminus, the 329-residue chain is Phosphate acyltransferase (329 aa).

Belongs to the PlsX family. In terms of assembly, homodimer. Probably interacts with PlsY.

It localises to the cytoplasm. The enzyme catalyses a fatty acyl-[ACP] + phosphate = an acyl phosphate + holo-[ACP]. It participates in lipid metabolism; phospholipid metabolism. Its function is as follows. Catalyzes the reversible formation of acyl-phosphate (acyl-PO(4)) from acyl-[acyl-carrier-protein] (acyl-ACP). This enzyme utilizes acyl-ACP as fatty acyl donor, but not acyl-CoA. The polypeptide is Phosphate acyltransferase (Sulfurovum sp. (strain NBC37-1)).